A 1138-amino-acid chain; its full sequence is Phosphatidylserine decarboxylase proenzyme 2 (1138 aa).

A C2 1 domain is found at 1–122 (MRIIKGRKRG…SNSGLSSHSH (122 aa)). Disordered stretches follow at residues 90 to 166 (TGAP…PGST), 269 to 305 (MRSS…DTDL), and 413 to 448 (AVSE…REDS). Low complexity predominate over residues 98-121 (SRPRTTTANTSSSTLSNSGLSSHS). A compositionally biased stretch (polar residues) spans 125–135 (RNLNVTSKGNQ). Over residues 136–166 (TSTSINSVSSSATPAPSHSSSSLSTTGPGST) the composition is skewed to low complexity. The span at 293-305 (EIRREKPYSDTDL) shows a compositional bias: basic and acidic residues. Residues 421-448 (SVDDEESENQQESDEEFDIYNEDEREDS) show a composition bias toward acidic residues. The C2 2 domain maps to 478-600 (RRAKSNFFIS…QQQQHENEWI (123 aa)). Ca(2+) contacts are provided by Asp571, Ser574, and Asp577. Catalysis depends on charge relay system; for autoendoproteolytic cleavage activity residues Asp899, His956, and Ser1043. Ser1043 serves as the catalytic Schiff-base intermediate with substrate; via pyruvic acid; for decarboxylase activity. Position 1043 is a pyruvic acid (Ser); by autocatalysis (Ser1043).

Belongs to the phosphatidylserine decarboxylase family. PSD-B subfamily. Eukaryotic type II sub-subfamily. In terms of assembly, heterodimer of a large membrane-associated beta subunit and a small pyruvoyl-containing alpha subunit. Interacts with pstB2/PDR17. This interaction may be a means to structurally tether the donor membrane (ER) harboring PstB2/PDR17 to acceptor membranes (Golgi/endosomes) harboring PSD2 during PtdSer transport to the site of PtdEtn synthesis. Requires pyruvate as cofactor. The cofactor is Ca(2+). In terms of processing, is synthesized initially as an inactive proenzyme. Formation of the active enzyme involves a self-maturation process in which the active site pyruvoyl group is generated from an internal serine residue via an autocatalytic post-translational modification. Two non-identical subunits are generated from the proenzyme in this reaction, and the pyruvate is formed at the N-terminus of the alpha chain, which is derived from the carboxyl end of the proenzyme. The autoendoproteolytic cleavage occurs by a canonical serine protease mechanism, in which the side chain hydroxyl group of the serine supplies its oxygen atom to form the C-terminus of the beta chain, while the remainder of the serine residue undergoes an oxidative deamination to produce ammonia and the pyruvoyl prosthetic group on the alpha chain. During this reaction, the Ser that is part of the protease active site of the proenzyme becomes the pyruvoyl prosthetic group, which constitutes an essential element of the active site of the mature decarboxylase.

The protein localises to the golgi apparatus membrane. Its subcellular location is the endosome membrane. It carries out the reaction a 1,2-diacyl-sn-glycero-3-phospho-L-serine + H(+) = a 1,2-diacyl-sn-glycero-3-phosphoethanolamine + CO2. Its pathway is phospholipid metabolism; phosphatidylethanolamine biosynthesis; phosphatidylethanolamine from CDP-diacylglycerol: step 2/2. Catalyzes the formation of phosphatidylethanolamine (PtdEtn) from phosphatidylserine (PtdSer). Plays a central role in phospholipid metabolism and in the interorganelle trafficking of phosphatidylserine. Phosphatidylethanolamine produced by PSD2 is insufficient to completely provide the PtdEtn pool required by mitochondria under respiratory conditions. PSD2 is also involved in the PtdSer transport step to the site of PtdEtn synthesis on the Golgi/endosome membranes. Required for normal heavy metal resistance. This is Phosphatidylserine decarboxylase proenzyme 2 from Saccharomyces cerevisiae (strain ATCC 204508 / S288c) (Baker's yeast).